Reading from the N-terminus, the 768-residue chain is WD repeat-containing protein 20 homolog (768 aa).

A disordered region spans residues Glu103–Pro122. WD repeat units follow at residues Ile224 to Asn264, Ile302 to Val342, Ser345 to Arg384, and Cys454 to Gly497. Positions Val531–Asn608 are disordered. Residues Asn539–Thr553 are compositionally biased toward polar residues. Residues Phe570 to Ser582 are compositionally biased toward low complexity. Positions Asn595–Asn608 are enriched in polar residues. One copy of the WD 5 repeat lies at Val646–Arg683. Residues Asp684–Val749 are disordered. Polar residues predominate over residues Ser688–Gly712. The span at Ser724–Ser733 shows a compositional bias: low complexity. Positions Glu734 to Val749 are enriched in polar residues.

In terms of assembly, interacts with usp-46; the interaction increases the catalytic activity of usp-46 in the presence of wdr-48. As to expression, expressed in several neurons in the head and tail.

Together with wdr-48, binds to and stimulates the activity of the deubiquitinating enzyme usp-46, leading to deubiquitination and stabilization of the glr-1 glutamate receptor. This is WD repeat-containing protein 20 homolog from Caenorhabditis elegans.